An 801-amino-acid polypeptide reads, in one-letter code: K(+)-insensitive pyrophosphate-energized proton pump (801 aa).

A run of 5 helical transmembrane segments spans residues 27–47 (VIVMVIGVVALAALVVAGILV), 81–101 (TLGVFAVVVFFLLMLLPADDW), 109–129 (VFFLIGALFSATTGYTGMWLA), 170–190 (GVVGMFTVGLGLLGASCVVLV), and 201–221 (GFGLGAALIAMFMRVGGGIFT). Residue Lys222 coordinates substrate. Mg(2+) contacts are provided by Asp225, Asp229, Asn252, and Asp255. A run of 7 helical transmembrane segments spans residues 261–281 (AGMAADLFESYAVTLVAALIL), 292–312 (AFPLIVPAIGVLTAMIGIFAV), 328–348 (GFFVSAVFSLALVAVAVYVYL), 372–392 (ILAMVAVAIGIVLAALIQQLT), 406–426 (IGKSSLTGAATVVLAGISVGL), 429–449 (AVYTALLIGLGVYGAFLLGGT), and 453–473 (LALFAVALAGTGLLTTVGVIV). Asp483 lines the Mg(2+) pocket. A run of 4 helical transmembrane segments spans residues 515–535 (AITKGIAIATAVLAASALFGS), 571–591 (VGLIAGAAVVFLFSGLAINAV), 641–661 (LLAVLAPIAIGFTLGVGALGA), and 663–683 (LAGAIGTGTLMAVFLANSGGA). Ca(2+) contacts are provided by Asp685, Asp711, and Asp715. Position 718 (Lys718) interacts with substrate. Helical transmembrane passes span 724–744 (AINPLLKVMNLVALLIAPAVV) and 754–774 (LGVRIAIAVLSILVIVGAVYI).

This sequence belongs to the H(+)-translocating pyrophosphatase (TC 3.A.10) family. K(+)-insensitive subfamily. As to quaternary structure, homodimer. The cofactor is Mg(2+).

The protein localises to the cell membrane. The catalysed reaction is diphosphate + H2O + H(+)(in) = 2 phosphate + 2 H(+)(out). Its function is as follows. Proton pump that utilizes the energy of pyrophosphate hydrolysis as the driving force for proton movement across the membrane. Generates a proton motive force. The polypeptide is K(+)-insensitive pyrophosphate-energized proton pump (Streptomyces avermitilis (strain ATCC 31267 / DSM 46492 / JCM 5070 / NBRC 14893 / NCIMB 12804 / NRRL 8165 / MA-4680)).